Here is a 504-residue protein sequence, read N- to C-terminus: Histidine ammonia-lyase (504 aa).

A cross-link (5-imidazolinone (Ala-Gly)) is located at residues 142 to 144; sequence ASG. Position 143 is a 2,3-didehydroalanine (Ser) (S143).

This sequence belongs to the PAL/histidase family. In terms of processing, contains an active site 4-methylidene-imidazol-5-one (MIO), which is formed autocatalytically by cyclization and dehydration of residues Ala-Ser-Gly.

The protein resides in the cytoplasm. It carries out the reaction L-histidine = trans-urocanate + NH4(+). It participates in amino-acid degradation; L-histidine degradation into L-glutamate; N-formimidoyl-L-glutamate from L-histidine: step 1/3. The polypeptide is Histidine ammonia-lyase (Staphylococcus aureus (strain bovine RF122 / ET3-1)).